The chain runs to 399 residues: Elongation factor Tu (399 aa).

The tr-type G domain occupies 10–204; it reads KPHVNIGTIG…AVDEAIPEPE (195 aa). Residues 19–26 are G1; sequence GHVDHGKT. GTP is bound at residue 19–26; the sequence is GHVDHGKT. Thr26 provides a ligand contact to Mg(2+). The tract at residues 60–64 is G2; the sequence is GITIN. Positions 81–84 are G3; the sequence is DCPG. GTP contacts are provided by residues 81–85 and 136–139; these read DCPGH and NKCD. The segment at 136–139 is G4; the sequence is NKCD. A G5 region spans residues 174–176; sequence SGL.

Belongs to the TRAFAC class translation factor GTPase superfamily. Classic translation factor GTPase family. EF-Tu/EF-1A subfamily. In terms of assembly, monomer.

The protein resides in the cytoplasm. It carries out the reaction GTP + H2O = GDP + phosphate + H(+). Functionally, GTP hydrolase that promotes the GTP-dependent binding of aminoacyl-tRNA to the A-site of ribosomes during protein biosynthesis. This is Elongation factor Tu from Parasynechococcus marenigrum (strain WH8102).